Reading from the N-terminus, the 328-residue chain is NADH-quinone oxidoreductase subunit H 1 (328 aa).

Transmembrane regions (helical) follow at residues 11–31 (VVKAVVLALCVTLAVAVFLLF), 81–101 (LAPVIAFFCALGVWVVIPWAP), 116–136 (VLVILAIAAMGVYGTALGGWA), 154–174 (ISYELAMAMSLLGVILMTGSV), 189–209 (LFPQFLGFLVFYIASLAEAGW), 235–257 (GLFFLTELTHAVNSAVLSTTFFL), 269–289 (IPGFVWFLLKVILMVFVLYWI), and 308–328 (VLLPVAALNLVGTAIYVALWA).

It belongs to the complex I subunit 1 family. In terms of assembly, NDH-1 is composed of 14 different subunits. Subunits NuoA, H, J, K, L, M, N constitute the membrane sector of the complex.

The protein localises to the cell membrane. The enzyme catalyses a quinone + NADH + 5 H(+)(in) = a quinol + NAD(+) + 4 H(+)(out). Functionally, NDH-1 shuttles electrons from NADH, via FMN and iron-sulfur (Fe-S) centers, to quinones in the respiratory chain. The immediate electron acceptor for the enzyme in this species is believed to be ubiquinone. Couples the redox reaction to proton translocation (for every two electrons transferred, four hydrogen ions are translocated across the cytoplasmic membrane), and thus conserves the redox energy in a proton gradient. This subunit may bind ubiquinone. The polypeptide is NADH-quinone oxidoreductase subunit H 1 (Symbiobacterium thermophilum (strain DSM 24528 / JCM 14929 / IAM 14863 / T)).